We begin with the raw amino-acid sequence, 592 residues long: Aspartate--tRNA ligase (592 aa).

Residue glutamate 173 coordinates L-aspartate. The interval 197–200 (QLFK) is aspartate. Position 219 (arginine 219) interacts with L-aspartate. ATP is bound by residues 219 to 221 (RDE) and glutamine 228. Residue histidine 448 coordinates L-aspartate. Glutamate 482 is a binding site for ATP. An L-aspartate-binding site is contributed by arginine 489. 534 to 537 (GLDR) is a binding site for ATP.

It belongs to the class-II aminoacyl-tRNA synthetase family. Type 1 subfamily. As to quaternary structure, homodimer.

Its subcellular location is the cytoplasm. It carries out the reaction tRNA(Asp) + L-aspartate + ATP = L-aspartyl-tRNA(Asp) + AMP + diphosphate. Functionally, catalyzes the attachment of L-aspartate to tRNA(Asp) in a two-step reaction: L-aspartate is first activated by ATP to form Asp-AMP and then transferred to the acceptor end of tRNA(Asp). This chain is Aspartate--tRNA ligase, found in Shewanella baltica (strain OS195).